The following is a 393-amino-acid chain: Methylthioribose kinase (393 aa).

Residues asparagine 38, lysine 53, and 107–109 (EDL) each bind ATP. Aspartate 225 provides a ligand contact to substrate. Residue 242–244 (DPE) participates in ATP binding. Arginine 332 serves as a coordination point for substrate.

It belongs to the methylthioribose kinase family. In terms of assembly, homodimer.

It catalyses the reaction 5-(methylsulfanyl)-D-ribose + ATP = 5-(methylsulfanyl)-alpha-D-ribose 1-phosphate + ADP + H(+). It functions in the pathway amino-acid biosynthesis; L-methionine biosynthesis via salvage pathway; S-methyl-5-thio-alpha-D-ribose 1-phosphate from S-methyl-5'-thioadenosine (hydrolase route): step 2/2. Catalyzes the phosphorylation of methylthioribose into methylthioribose-1-phosphate. The protein is Methylthioribose kinase of Bacillus thuringiensis subsp. konkukian (strain 97-27).